The following is a 289-amino-acid chain: Transcriptional regulator Rob (289 aa).

In terms of domain architecture, HTH araC/xylS-type spans 8 to 106 (RDLLIWLEGH…SQTPALYRRS (99 aa)). DNA-binding regions (H-T-H motif) lie at residues 25–46 (DNVAAKAGYSKWHLQRMFKDVT) and 73–96 (ILDIALQYRFDSQQTFTRAFKKQF).

Transcriptional regulator. Represses transcription of genes belonging to the flagellar regulon, including flhD, flhB and fliC; probably thereby leading to repression of motility. Binds to regulatory regions of target genes, including the promoters of the flhDC operon and of P-type ATPase mgtA. Involved in post-transcriptional regulation of expression. Represses expression of the flhDC operon in a post-transcriptional manner. Binds to the right arm of the replication origin oriC of the chromosome. Rob binding may influence the formation of the nucleoprotein structure, required for oriC function in the initiation of replication. This chain is Transcriptional regulator Rob, found in Salmonella typhimurium (strain LT2 / SGSC1412 / ATCC 700720).